We begin with the raw amino-acid sequence, 183 residues long: Somatotropin (183 aa).

Residue His19 coordinates Zn(2+). The disordered stretch occupies residues 38–67; the sequence is EEQRHSHKSSPSAFCQSETIPAPTGKEDAQ. Over residues 46–56 the composition is skewed to polar residues; the sequence is SSPSAFCQSET. Cys52 and Cys156 form a disulfide bridge. Glu165 is a Zn(2+) binding site. Cysteines 173 and 181 form a disulfide.

Belongs to the somatotropin/prolactin family.

It is found in the secreted. In terms of biological role, growth hormone plays an important role in growth control and is involved in the regulation of several anabolic processes. Implicated as an osmoregulatory substance important for seawater adaptation. This Prionace glauca (Blue shark) protein is Somatotropin (gh).